A 443-amino-acid chain; its full sequence is GTPase Der (443 aa).

EngA-type G domains are found at residues 3-167 (PVIA…PEEK) and 176-349 (IKIA…QSIQ). GTP contacts are provided by residues 9 to 16 (GRPNVGKS), 56 to 60 (DTGGL), 119 to 122 (NKAD), 182 to 189 (GRPNVGKS), 229 to 233 (DTAGI), and 294 to 297 (NKWD). The region spanning 350 to 434 (QELTTGQLTR…PVHIKLKTDP (85 aa)) is the KH-like domain.

It belongs to the TRAFAC class TrmE-Era-EngA-EngB-Septin-like GTPase superfamily. EngA (Der) GTPase family. Associates with the 50S ribosomal subunit.

In terms of biological role, GTPase that plays an essential role in the late steps of ribosome biogenesis. This Coxiella burnetii (strain CbuG_Q212) (Coxiella burnetii (strain Q212)) protein is GTPase Der.